A 310-amino-acid chain; its full sequence is Homoserine kinase (310 aa).

An ATP-binding site is contributed by 91–101 (PIGSGLGSSAC).

It belongs to the GHMP kinase family. Homoserine kinase subfamily.

Its subcellular location is the cytoplasm. It catalyses the reaction L-homoserine + ATP = O-phospho-L-homoserine + ADP + H(+). It participates in amino-acid biosynthesis; L-threonine biosynthesis; L-threonine from L-aspartate: step 4/5. Functionally, catalyzes the ATP-dependent phosphorylation of L-homoserine to L-homoserine phosphate. This chain is Homoserine kinase, found in Escherichia coli O6:H1 (strain CFT073 / ATCC 700928 / UPEC).